The sequence spans 229 residues: Potassium/proton antiporter CemA (229 aa).

The next 3 helical transmembrane spans lie at 7-27 (FTPL…SLSF), 114-134 (IICF…LVIL), and 189-209 (ILSG…KFWI).

This sequence belongs to the CemA family.

It localises to the plastid. It is found in the chloroplast inner membrane. The enzyme catalyses K(+)(in) + H(+)(out) = K(+)(out) + H(+)(in). Its function is as follows. Contributes to K(+)/H(+) antiport activity by supporting proton efflux to control proton extrusion and homeostasis in chloroplasts in a light-dependent manner to modulate photosynthesis. Prevents excessive induction of non-photochemical quenching (NPQ) under continuous-light conditions. Indirectly promotes efficient inorganic carbon uptake into chloroplasts. The polypeptide is Potassium/proton antiporter CemA (Panax ginseng (Korean ginseng)).